The sequence spans 525 residues: MSNIHDHKILILDFGSQYTQLIARRIREIGVYCELWAWDVSEAQIREFAPNGIILAGGPESVTADNSPRAPEYVFNAGVPVLGICYGMQTMSEQLGGKVIQGVGEGEFGYAQIELQTTSALFKSIEDAVSAEGKPLLDVWMSHGDKVSAIPDGFVTVAKTATCPFAAMANEEKGFYGVQFHPEVTHTRQGQRMLEHFALDICGCKANWKPSSIIEDAIERLKKQIGDDEVILGLSGGVDSSVVAMLLHRAIGDKLTCVFVDNGLLRLNEAEQVLEMFGDHFGLNIVHVDAENRFLDAMAGEAEPEAKRKIIGRVFVEIFDEESKKCANAKWLAQGTIYPDVIESAGSATGKAHVIKSHHNVGGLPADMKMGLVEPLRELFKDEVRKIGLELGLPYNMLYRHPFPGPGLGVRVLGEVKKEYCDLLRSADAIFIEELHKADLYNKVSQAFTVFLPVRSVGVMGDGRKYDWVVSLRAVETIDFMTAHWAHLPYDFLGRVSNRIINEVDGISRVVYDISGKPPATIEWE.

The Glutamine amidotransferase type-1 domain occupies 8–207 (KILILDFGSQ…ALDICGCKAN (200 aa)). The active-site Nucleophile is the Cys-85. Residues His-181 and Glu-183 contribute to the active site. In terms of domain architecture, GMPS ATP-PPase spans 208 to 400 (WKPSSIIEDA…LGLPYNMLYR (193 aa)). Residue 235–241 (SGGVDSS) participates in ATP binding.

As to quaternary structure, homodimer.

The catalysed reaction is XMP + L-glutamine + ATP + H2O = GMP + L-glutamate + AMP + diphosphate + 2 H(+). It participates in purine metabolism; GMP biosynthesis; GMP from XMP (L-Gln route): step 1/1. In terms of biological role, catalyzes the synthesis of GMP from XMP. The chain is GMP synthase [glutamine-hydrolyzing] from Shewanella frigidimarina (strain NCIMB 400).